The primary structure comprises 259 residues: Dihydroorotate dehydrogenase B (NAD(+)), electron transfer subunit (259 aa).

The 101-residue stretch at 2–102 folds into the FAD-binding FR-type domain; the sequence is MQKQNMIVVN…LGPLGHGFPV (101 aa). Residues 53–56, 70–72, and 77–78 each bind FAD; these read RPIS, LYR, and GT. Residues C221, C226, C229, and C246 each coordinate [2Fe-2S] cluster.

It belongs to the PyrK family. In terms of assembly, heterotetramer of 2 PyrK and 2 PyrD type B subunits. [2Fe-2S] cluster is required as a cofactor. The cofactor is FAD.

The protein operates within pyrimidine metabolism; UMP biosynthesis via de novo pathway; orotate from (S)-dihydroorotate (NAD(+) route): step 1/1. Responsible for channeling the electrons from the oxidation of dihydroorotate from the FMN redox center in the PyrD type B subunit to the ultimate electron acceptor NAD(+). The chain is Dihydroorotate dehydrogenase B (NAD(+)), electron transfer subunit from Bacillus cereus (strain G9842).